A 331-amino-acid chain; its full sequence is Glutamyl-tRNA reductase (331 aa).

Substrate contacts are provided by residues Thr-49 to Arg-52, Ser-107, Glu-112 to Gln-114, and Gln-118. Cys-50 (nucleophile) is an active-site residue. Gly-184 to Gly-189 serves as a coordination point for NADP(+).

This sequence belongs to the glutamyl-tRNA reductase family. As to quaternary structure, homodimer.

The catalysed reaction is (S)-4-amino-5-oxopentanoate + tRNA(Glu) + NADP(+) = L-glutamyl-tRNA(Glu) + NADPH + H(+). The protein operates within porphyrin-containing compound metabolism; protoporphyrin-IX biosynthesis; 5-aminolevulinate from L-glutamyl-tRNA(Glu): step 1/2. In terms of biological role, catalyzes the NADPH-dependent reduction of glutamyl-tRNA(Glu) to glutamate 1-semialdehyde (GSA). This Acetivibrio thermocellus (strain ATCC 27405 / DSM 1237 / JCM 9322 / NBRC 103400 / NCIMB 10682 / NRRL B-4536 / VPI 7372) (Clostridium thermocellum) protein is Glutamyl-tRNA reductase.